Here is a 333-residue protein sequence, read N- to C-terminus: Protoheme IX farnesyltransferase (333 aa).

8 consecutive transmembrane segments (helical) span residues 63 to 83, 109 to 129, 132 to 152, 160 to 180, 188 to 208, 214 to 234, 245 to 265, and 292 to 312; these read LACT…LNCI, AAFI…VSGV, LAAG…TAIL, IVIG…AASG, WLFS…ALLL, AVGI…RAIS, GFGV…LIPF, and WSIF…LPMA.

This sequence belongs to the UbiA prenyltransferase family. Protoheme IX farnesyltransferase subfamily.

The protein localises to the cell inner membrane. The enzyme catalyses heme b + (2E,6E)-farnesyl diphosphate + H2O = Fe(II)-heme o + diphosphate. It functions in the pathway porphyrin-containing compound metabolism; heme O biosynthesis; heme O from protoheme: step 1/1. Functionally, converts heme B (protoheme IX) to heme O by substitution of the vinyl group on carbon 2 of heme B porphyrin ring with a hydroxyethyl farnesyl side group. This is Protoheme IX farnesyltransferase from Prochlorococcus marinus (strain MIT 9313).